Here is a 130-residue protein sequence, read N- to C-terminus: Small ribosomal subunit protein uS8 (130 aa).

The protein belongs to the universal ribosomal protein uS8 family. Part of the 30S ribosomal subunit. Contacts proteins S5 and S12.

In terms of biological role, one of the primary rRNA binding proteins, it binds directly to 16S rRNA central domain where it helps coordinate assembly of the platform of the 30S subunit. This Chromohalobacter salexigens (strain ATCC BAA-138 / DSM 3043 / CIP 106854 / NCIMB 13768 / 1H11) protein is Small ribosomal subunit protein uS8.